A 202-amino-acid chain; its full sequence is Peptidyl-tRNA hydrolase (202 aa).

Y14 serves as a coordination point for tRNA. The active-site Proton acceptor is the H19. TRNA contacts are provided by F64, N66, and N112.

This sequence belongs to the PTH family. As to quaternary structure, monomer.

The protein resides in the cytoplasm. It catalyses the reaction an N-acyl-L-alpha-aminoacyl-tRNA + H2O = an N-acyl-L-amino acid + a tRNA + H(+). Functionally, hydrolyzes ribosome-free peptidyl-tRNAs (with 1 or more amino acids incorporated), which drop off the ribosome during protein synthesis, or as a result of ribosome stalling. Catalyzes the release of premature peptidyl moieties from peptidyl-tRNA molecules trapped in stalled 50S ribosomal subunits, and thus maintains levels of free tRNAs and 50S ribosomes. The protein is Peptidyl-tRNA hydrolase of Methylobacterium radiotolerans (strain ATCC 27329 / DSM 1819 / JCM 2831 / NBRC 15690 / NCIMB 10815 / 0-1).